A 138-amino-acid polypeptide reads, in one-letter code: Large ribosomal subunit protein uL16 (138 aa).

The segment covering 1-13 has biased composition (basic residues); sequence MLQPARRKFRKEQ. A disordered region spans residues 1–22; that stretch reads MLQPARRKFRKEQKGRNTGVAT.

This sequence belongs to the universal ribosomal protein uL16 family. Part of the 50S ribosomal subunit.

Its function is as follows. Binds 23S rRNA and is also seen to make contacts with the A and possibly P site tRNAs. In Acidovorax ebreus (strain TPSY) (Diaphorobacter sp. (strain TPSY)), this protein is Large ribosomal subunit protein uL16.